A 1166-amino-acid polypeptide reads, in one-letter code: ATP-dependent helicase/deoxyribonuclease subunit B (1166 aa).

A UvrD-like helicase ATP-binding domain is found at 1–390 (MGVEFLVGRS…HPLIEFIRSS (390 aa)). ATP is bound at residue 8–15 (GRSGSGKT). Residues 281–586 (TKRHQHAPEL…HFSLIPPALD (306 aa)) form the UvrD-like helicase C-terminal domain. Cys-801, Cys-1121, Cys-1124, and Cys-1130 together coordinate [4Fe-4S] cluster.

It belongs to the helicase family. AddB/RexB type 1 subfamily. As to quaternary structure, heterodimer of AddA and AddB. Mg(2+) is required as a cofactor. The cofactor is [4Fe-4S] cluster.

Functionally, the heterodimer acts as both an ATP-dependent DNA helicase and an ATP-dependent, dual-direction single-stranded exonuclease. Recognizes the chi site generating a DNA molecule suitable for the initiation of homologous recombination. The AddB subunit has 5' -&gt; 3' nuclease activity but not helicase activity. The sequence is that of ATP-dependent helicase/deoxyribonuclease subunit B from Bacillus velezensis (strain DSM 23117 / BGSC 10A6 / LMG 26770 / FZB42) (Bacillus amyloliquefaciens subsp. plantarum).